The chain runs to 572 residues: Bilirubin oxidase (572 aa).

Positions 1–19 (MFKHTLGAAALSLLFNSNA) are cleaved as a signal peptide. Residues 20–38 (VQASPVPETSPATGHLFKR) constitute a propeptide that is removed on maturation. Plastocyanin-like domains lie at 98 to 194 (VGYD…YMLT) and 404 to 526 (VAFA…VFVD). Positions 132, 134, 172, 174, 436, 439, 441, 494, 495, 496, 500, and 505 each coordinate Cu cation. N-linked (GlcNAc...) asparagine glycosylation is found at Asn-510 and Asn-520.

It belongs to the multicopper oxidase family. Cu cation serves as cofactor.

The catalysed reaction is 2 (4Z,15Z)-bilirubin IXalpha + O2 = 2 biliverdin IXalpha + 2 H2O. In terms of biological role, oxidation of bilirubin and other tetrapyrroles. The protein is Bilirubin oxidase of Albifimbria verrucaria (Myrothecium leaf spot and pod blight fungus).